Here is a 635-residue protein sequence, read N- to C-terminus: Threonine--tRNA ligase (635 aa).

In terms of domain architecture, TGS spans 1–61 (MIKITLKDGK…HKDSSLEILT (61 aa)). Residues 242–532 (DHRKLGKELD…LIEQYAGAFP (291 aa)) form a catalytic region. 3 residues coordinate Zn(2+): Cys333, His384, and His509.

Belongs to the class-II aminoacyl-tRNA synthetase family. In terms of assembly, homodimer. It depends on Zn(2+) as a cofactor.

The protein localises to the cytoplasm. The catalysed reaction is tRNA(Thr) + L-threonine + ATP = L-threonyl-tRNA(Thr) + AMP + diphosphate + H(+). Functionally, catalyzes the attachment of threonine to tRNA(Thr) in a two-step reaction: L-threonine is first activated by ATP to form Thr-AMP and then transferred to the acceptor end of tRNA(Thr). Also edits incorrectly charged L-seryl-tRNA(Thr). This Clostridium botulinum (strain Kyoto / Type A2) protein is Threonine--tRNA ligase.